Here is a 124-residue protein sequence, read N- to C-terminus: MAITKEDVLEYISNLSVLELSELVKEFEEKFGVSAAPVMVAGGAGAGAAAAAEEKTEFDLVLTDTGAEKIKVIKAVRAITGLGLKEAKDAVEKTPSVLKEGMNKEDAEKAKADLEAAGAKVELK.

A disordered region spans residues 99-124; that stretch reads KEGMNKEDAEKAKADLEAAGAKVELK. Over residues 101–114 the composition is skewed to basic and acidic residues; sequence GMNKEDAEKAKADL. Low complexity predominate over residues 115–124; it reads EAAGAKVELK.

It belongs to the bacterial ribosomal protein bL12 family. In terms of assembly, homodimer. Part of the ribosomal stalk of the 50S ribosomal subunit. Forms a multimeric L10(L12)X complex, where L10 forms an elongated spine to which 2 to 4 L12 dimers bind in a sequential fashion. Binds GTP-bound translation factors.

In terms of biological role, forms part of the ribosomal stalk which helps the ribosome interact with GTP-bound translation factors. Is thus essential for accurate translation. This is Large ribosomal subunit protein bL12 from Campylobacter hominis (strain ATCC BAA-381 / DSM 21671 / CCUG 45161 / LMG 19568 / NCTC 13146 / CH001A).